The following is a 358-amino-acid chain: Probable BOI-related E3 ubiquitin-protein ligase 2 (358 aa).

Residues 171–234 (KYEIEEKRKR…NQIWRDLAQT (64 aa)) are a coiled coil. The segment at 214 to 250 (LEERVKSLSIENQIWRDLAQTNEATANHLRTNLEHVL) is WRD domain. An RING-type zinc finger spans residues 310 to 345 (CRNCGEEESCVLLLPCRHLCLCGVCGSSVHTCPICT).

In terms of assembly, interacts with the DELLA proteins GAI, RGA, RGL1, RGL2 and RGL3.

It carries out the reaction S-ubiquitinyl-[E2 ubiquitin-conjugating enzyme]-L-cysteine + [acceptor protein]-L-lysine = [E2 ubiquitin-conjugating enzyme]-L-cysteine + N(6)-ubiquitinyl-[acceptor protein]-L-lysine.. It participates in protein degradation; proteasomal ubiquitin-dependent pathway. Its function is as follows. Probable E3 ubiquitin-protein ligase. Has no effect on the stability of the DELLA proteins. This chain is Probable BOI-related E3 ubiquitin-protein ligase 2 (BRG2), found in Arabidopsis thaliana (Mouse-ear cress).